We begin with the raw amino-acid sequence, 565 residues long: Adenine deaminase (565 aa).

This sequence belongs to the metallo-dependent hydrolases superfamily. Adenine deaminase family. Mn(2+) serves as cofactor.

The catalysed reaction is adenine + H2O + H(+) = hypoxanthine + NH4(+). The chain is Adenine deaminase from Lactobacillus delbrueckii subsp. bulgaricus (strain ATCC 11842 / DSM 20081 / BCRC 10696 / JCM 1002 / NBRC 13953 / NCIMB 11778 / NCTC 12712 / WDCM 00102 / Lb 14).